The chain runs to 570 residues: Glycine--tRNA ligase (570 aa).

Substrate-binding residues include arginine 95 and glutamate 159. ATP is bound by residues 191 to 193 (RNE), 201 to 206 (IRLREF), 312 to 313 (EV), and 426 to 429 (GLDR). 206 to 210 (FNQAE) serves as a coordination point for substrate. 422–426 (EPSFG) serves as a coordination point for substrate.

Belongs to the class-II aminoacyl-tRNA synthetase family.

The protein localises to the cytoplasm. The catalysed reaction is tRNA(Gly) + glycine + ATP = glycyl-tRNA(Gly) + AMP + diphosphate. Its function is as follows. Catalyzes the attachment of glycine to tRNA(Gly). The chain is Glycine--tRNA ligase from Archaeoglobus fulgidus (strain ATCC 49558 / DSM 4304 / JCM 9628 / NBRC 100126 / VC-16).